A 796-amino-acid polypeptide reads, in one-letter code: DNA damage-responsive transcriptional repressor RPH1 (796 aa).

In terms of domain architecture, JmjN spans 14 to 55 (VPVFKPTYEQFEDFYAYCKAINKYGMKSGVVKVIPPKEWKDK). The JmjC domain occupies 193 to 355 (PEGLNVWNVA…IGKKAGKCHC (163 aa)). Thr399 is subject to Phosphothreonine. Phosphoserine is present on residues Ser430, Ser459, Ser557, Ser561, Ser575, and Ser584. Residues 455 to 471 (KRISSFQEQPLNKLLKR) carry the Bipartite nuclear localization signal motif. The tract at residues 599–692 (RQQHSQQHSF…DKEQGSSPLN (94 aa)) is disordered. Positions 601 to 621 (QHSQQHSFSTPSTVSNLSTSV) are enriched in polar residues. Over residues 629–640 (NDIKTPHPERPN) the composition is skewed to basic and acidic residues. At Ser652 the chain carries Phosphoserine. Polar residues predominate over residues 654-669 (VETSKSNLILSKVAST). Residues 670–686 (RQEDSFTSRNDDLDKEQ) are compositionally biased toward basic and acidic residues. Ser689 is modified (phosphoserine). Residues 709–732 (YICKECQRKFSSGHHLTRHKKSVH) form a C2H2-type 1 zinc finger. A C2H2-type 2; atypical zinc finger spans residues 738–763 (HSCPKCGKRFKRRDHVLQHLNKKIPC). Residues 774–796 (IMNPTVQPQDGKAAINQQSTPLN) form a disordered region.

Post-translationally, RAD53-dependent phosphorylated in response to DNA damage.

It localises to the nucleus. Functionally, transcriptional repressor of photolyase PHR1. Recognizes and binds the sequence AG(4) in the upstream repressing sequence of PHR1. Derepresses PHR1 transcription when phosphorylated. This chain is DNA damage-responsive transcriptional repressor RPH1 (RPH1), found in Saccharomyces cerevisiae (strain ATCC 204508 / S288c) (Baker's yeast).